A 622-amino-acid polypeptide reads, in one-letter code: MALLQISEPGMAPAPHQRRLAVGIDLGTTNSLVAAVRNSVPEVLPDEAGRVLLPSVVRYLEKGGRRIGHEAKEQAATDPRNTIVSVKRFMGRGKAEVEGAANAPYEFVDAPGMVQIRTIDGVKSPVEVSAEILATLRYRAEDSLGDDLVGAVITVPAYFDEAQRQATKDAARLAGLNVLRLLNEPTAAAIAYGLDNGSEGLYAVYDLGGGTFDLSILKLTKGVFEVLAAGGDSALGGDDFDHALFGHVLAQAGIDVKTLAPEDVRLLLDRVRVLKEALSSAPQASLDVTLSGGAHLVQTISHDTFASLVEPLVQRTLTPTRKALRDAQVTSADIKGVVLVGGATRMPVIRDAVAKYFGQPPLVNLDPDQVVALGAAIQADLLAGNRGTGDDWLLLDVIPLSLGVETMGGLVEKIIPRNSTIPIARAQEFTTFKDGQTAMAIHVVQGERELVADCRSLARFELRGIPPMTAGAARIRVTYQVDADGLLSVFAREQLSGVEASVVVKPSYGLADDDIAKMLEDSFKTAEIDMRARALREAQVEAERMLEATQAALAADGELLDADERTQVDTLAAALRAVAQGDDTNAIEAATKALAEGTDEFAARRMDKSIKRALSGRRLDEI.

The protein belongs to the heat shock protein 70 family.

Its function is as follows. Chaperone involved in the maturation of iron-sulfur cluster-containing proteins. Has a low intrinsic ATPase activity which is markedly stimulated by HscB. This is Chaperone protein HscA homolog from Burkholderia lata (strain ATCC 17760 / DSM 23089 / LMG 22485 / NCIMB 9086 / R18194 / 383).